The following is a 431-amino-acid chain: Probable ganciclovir kinase (431 aa).

A Protein kinase domain is found at 79 to 368; the sequence is PQEDAVLGSG…KLSIGIDSFG (290 aa). ATP contacts are provided by residues 85–93 and Lys103; that span reads LGSGSFGSV. Asp195 acts as the Proton acceptor in catalysis.

This sequence belongs to the protein kinase superfamily. Tyr protein kinase family. HCMV ganciclovir subfamily.

Its function is as follows. Phosphorylates the antiviral nucleoside analog ganciclovir. In Saimiriine herpesvirus 2 (strain 11) (SaHV-2), this protein is Probable ganciclovir kinase (36).